Reading from the N-terminus, the 945-residue chain is Leucine--tRNA ligase (945 aa).

A 'HIGH' region motif is present at residues P43–H53. The 'KMSKS' region motif lies at K638 to S642. ATP is bound at residue K641.

It belongs to the class-I aminoacyl-tRNA synthetase family.

The protein localises to the cytoplasm. It catalyses the reaction tRNA(Leu) + L-leucine + ATP = L-leucyl-tRNA(Leu) + AMP + diphosphate. This chain is Leucine--tRNA ligase, found in Pyrobaculum neutrophilum (strain DSM 2338 / JCM 9278 / NBRC 100436 / V24Sta) (Thermoproteus neutrophilus).